A 366-amino-acid polypeptide reads, in one-letter code: MTPEHLPTEQYEAQLAEKVVRLQTMMAPFAAPVPEVFRSPVSHYRMRAEFRLWHDGDDLYHIIFDQQTRSRIRVDSFPAASALINQLMTAMLEGVRNNPVLRHKLFQIDYLTTLSNQAVVSLLYHKKLDDTWREQAEALRDALRAQGLNVHLIGRATKTKIELDQDYIDERLPVGGREMIYRQVENSFTQPNAAMNIQMLEWALDVTKEATGDLLELYCGNGNFSLALARNFDRVLATEIAKPSVAAAQYNIAANHIDNVQIIRMAAEEFTQAMNGVREFNRLQGIDLQSYQCETIFVDPPRSGLDSETEKMVQAYPRILYISCNPETLCRNLETLSQTHNVTRLALFDQFPYTHHMECGVLLTRK.

S-adenosyl-L-methionine is bound by residues Q190, Y218, N223, E239, and D299. Catalysis depends on C324, which acts as the Nucleophile. Residue E358 is the Proton acceptor of the active site.

This sequence belongs to the class I-like SAM-binding methyltransferase superfamily. RNA M5U methyltransferase family. TrmA subfamily.

The enzyme catalyses uridine(54) in tRNA + S-adenosyl-L-methionine = 5-methyluridine(54) in tRNA + S-adenosyl-L-homocysteine + H(+). The catalysed reaction is uridine(341) in tmRNA + S-adenosyl-L-methionine = 5-methyluridine(341) in tmRNA + S-adenosyl-L-homocysteine + H(+). In terms of biological role, dual-specificity methyltransferase that catalyzes the formation of 5-methyluridine at position 54 (m5U54) in all tRNAs, and that of position 341 (m5U341) in tmRNA (transfer-mRNA). In Klebsiella pneumoniae (strain 342), this protein is tRNA/tmRNA (uracil-C(5))-methyltransferase.